We begin with the raw amino-acid sequence, 204 residues long: Abscisic acid receptor PYL3 (204 aa).

The START-like stretch occupies residues 40-191 (HEPRDHQCSS…NLKSLAEVSE (152 aa)). C47 and C172 are joined by a disulfide. Abscisate is bound by residues K76, 104 to 109 (ATRSTE), 131 to 137 (RLKNYSS), and E156. Positions 100 to 104 (SGLPA) match the Gate loop motif. Positions 130–132 (HRL) match the Latch loop motif.

It belongs to the PYR/PYL/RCAR abscisic acid intracellular receptor family. As to quaternary structure, monomer. Interacts with PP2C50. Binding to PP2C50 is dependent on the presence of abscisic acid (ABA). Interacts with PP2C30 and PP2C53.

Its subcellular location is the cytoplasm. The protein resides in the cytosol. It localises to the nucleus. In terms of biological role, involved in abscisic acid (ABA) signaling during seed germination and abiotic stress response. Acts as a positive regulator of ABA-mediated inhibition of seed germination, and tolerance to drought and cold stresses. Together with PP2C50 and SAPK10, may form an ABA signaling module involved in stress response. Inhibits the protein phosphatases PP2C06 and PP2C09 when activated by abscisic acid (ABA). In Oryza sativa subsp. japonica (Rice), this protein is Abscisic acid receptor PYL3.